The sequence spans 40 residues: Large ribosomal subunit protein bL36B (40 aa).

It belongs to the bacterial ribosomal protein bL36 family.

The sequence is that of Large ribosomal subunit protein bL36B from Arthrobacter sp. (strain FB24).